Reading from the N-terminus, the 222-residue chain is MSDLGRGEGTGFDAERKMQFLYQLRQKGVMDKRVLTAMEHVDRGAFVRGHFASRAYEDVPLPISSGQTISQPSVVGLMTQALNVQPRDTVLEVGTGSGYQAAILSHLARRIYTIDRHRNLTREAEIIFTRMGLVNITVLTRDGSFGLPDQGPFDRILITAAAEDPPGPLLQQLKVGGVMVVPVGQSDTVQSLIKVTRLETGFDYDELMPVRFVPLVEGTARD.

Ser-70 is a catalytic residue.

It belongs to the methyltransferase superfamily. L-isoaspartyl/D-aspartyl protein methyltransferase family.

It is found in the cytoplasm. The catalysed reaction is [protein]-L-isoaspartate + S-adenosyl-L-methionine = [protein]-L-isoaspartate alpha-methyl ester + S-adenosyl-L-homocysteine. Functionally, catalyzes the methyl esterification of L-isoaspartyl residues in peptides and proteins that result from spontaneous decomposition of normal L-aspartyl and L-asparaginyl residues. It plays a role in the repair and/or degradation of damaged proteins. This is Protein-L-isoaspartate O-methyltransferase from Jannaschia sp. (strain CCS1).